The chain runs to 118 residues: Evasin P546 (118 aa).

Residues 1 to 21 (MKVLLYIAASCLMLLALNVSA) form the signal peptide. 4 cysteine pairs are disulfide-bonded: Cys38–Cys59, Cys55–Cys96, Cys72–Cys101, and Cys91–Cys110. The N-linked (GlcNAc...) asparagine glycan is linked to Asn45.

Its subcellular location is the secreted. Functionally, salivary chemokine-binding protein which binds to host chemokines CCL1, CCL3, CCL5 and CCL22. This Amblyomma cajennense (Cayenne tick) protein is Evasin P546.